A 960-amino-acid polypeptide reads, in one-letter code: Ran GTPase-activating protein 2 (960 aa).

5 LRR repeats span residues 69–92 (HLNLEVLDFRGNTLSVLAGKLIAE), 132–156 (GCRLTTLDLSDNAFGAGLSTSLYNF), 162–185 (LYSLENLILNNNGLGLAGKTVGKA), 227–254 (LGTLEEIRLPQNGIRDDGIIALAEAFRM), and 313–340 (RDCLKKVVLSGNNITSDVIDEIGACFNS). The segment at 370 to 408 (NIDFGRRGDDELLSSDEEEEQGAEDASMEEDAFNTSRET) is disordered. The span at 380-401 (ELLSSDEEEEQGAEDASMEEDA) shows a compositional bias: acidic residues. 4 LRR repeats span residues 475-498 (ASSMKALELRGNTLGIAAGNVIAK), 538-561 (GCKIKELDLSDNAFGPIGADALKD), 568-595 (SFSLEVLKLNNNGLGIGGKQIAKSLTEC), and 663-685 (NRNLRYLWLEDNTVLPKGAKALA). Positions 777–819 (PENVNVGDEDDDLGSLDGDQEEYNSKSSDSEDADLDDDDEDDD) are disordered. 2 stretches are compositionally biased toward acidic residues: residues 783–798 (GDEDDDLGSLDGDQEE) and 806–819 (SEDADLDDDDEDDD).

It is found in the nucleus. Functionally, GTPase system comprising ran-1, ran-2 and ran-3 is essential in nucleocytoplasmic trafficking. Ran-2 is a GTPase activator for the nuclear RAS-related regulatory protein Ran, converting it to the putatively inactive GDP-bound state. Required for correct chromosome alignment and segregation on the metaphase plate. In Caenorhabditis elegans, this protein is Ran GTPase-activating protein 2 (ran-2).